Consider the following 346-residue polypeptide: uncharacterized protein (346 aa).

Residue histidine 65 participates in Zn(2+) binding. Aspartate 67 is a catalytic residue. Aspartate 89 provides a ligand contact to Zn(2+). The active-site Proton acceptor is the glutamate 115. Residues glutamate 116, glutamate 145, and histidine 319 each coordinate Zn(2+).

The protein belongs to the peptidase M20A family. The cofactor is Zn(2+). Requires Co(2+) as cofactor.

This is an uncharacterized protein from Methanocaldococcus jannaschii (strain ATCC 43067 / DSM 2661 / JAL-1 / JCM 10045 / NBRC 100440) (Methanococcus jannaschii).